The primary structure comprises 169 residues: Procalin (169 aa).

The signal sequence occupies residues 1–18; that stretch reads MKTFIVITFIGILSYAYA. Disulfide bonds link Cys-21-Cys-125, Cys-54-Cys-168, and Cys-83-Cys-97.

The protein belongs to the calycin superfamily. Triabin family. In terms of tissue distribution, expressed in salivary glands.

The protein resides in the secreted. The sequence is that of Procalin from Hospesneotomae protracta (Western bloodsucking conenose).